The following is a 24-amino-acid chain: M-poneritoxin-Ng1e (24 aa).

Expressed by the venom gland.

Its subcellular location is the secreted. The protein localises to the target cell membrane. In terms of biological role, has a broad spectrum of activity against both Gram-positive and Gram-negative bacteria and S.cerevisiae. Has insecticidal and hemolytic activities. May act by disrupting the integrity of the bacterial cell membrane. This Neoponera goeldii (Ponerine ant) protein is M-poneritoxin-Ng1e.